A 226-amino-acid chain; its full sequence is Transcriptional regulatory protein PcoR (226 aa).

The Response regulatory domain maps to 3 to 117; the sequence is RILIVEDEQK…ELVARVRTLL (115 aa). Position 52 is a 4-aspartylphosphate (aspartate 52). A DNA-binding region (ompR/PhoB-type) is located at residues 125–223; it reads ATVCTIADMT…VRGAGYVLEI (99 aa).

Phosphorylated by PcoS.

Its subcellular location is the cytoplasm. Probable member of a two-component regulatory system PcoS/PcoR. May be involved in the activation of copper resistance gene operon pcoABCD by binding to a specific site on the cop operon promoter (copper box). This is Transcriptional regulatory protein PcoR (pcoR) from Escherichia coli.